Reading from the N-terminus, the 548-residue chain is Chaperonin GroEL (548 aa).

ATP is bound by residues 30–33 (TLGP), lysine 51, 87–91 (DGTTT), glycine 415, and aspartate 496.

The protein belongs to the chaperonin (HSP60) family. Forms a cylinder of 14 subunits composed of two heptameric rings stacked back-to-back. Interacts with the co-chaperonin GroES.

It localises to the cytoplasm. The catalysed reaction is ATP + H2O + a folded polypeptide = ADP + phosphate + an unfolded polypeptide.. In terms of biological role, together with its co-chaperonin GroES, plays an essential role in assisting protein folding. The GroEL-GroES system forms a nano-cage that allows encapsulation of the non-native substrate proteins and provides a physical environment optimized to promote and accelerate protein folding. The polypeptide is Chaperonin GroEL (Haemophilus influenzae (strain PittGG)).